The chain runs to 475 residues: Aspartyl/glutamyl-tRNA(Asn/Gln) amidotransferase subunit B (475 aa).

This sequence belongs to the GatB/GatE family. GatB subfamily. Heterotrimer of A, B and C subunits.

The catalysed reaction is L-glutamyl-tRNA(Gln) + L-glutamine + ATP + H2O = L-glutaminyl-tRNA(Gln) + L-glutamate + ADP + phosphate + H(+). It catalyses the reaction L-aspartyl-tRNA(Asn) + L-glutamine + ATP + H2O = L-asparaginyl-tRNA(Asn) + L-glutamate + ADP + phosphate + 2 H(+). Allows the formation of correctly charged Asn-tRNA(Asn) or Gln-tRNA(Gln) through the transamidation of misacylated Asp-tRNA(Asn) or Glu-tRNA(Gln) in organisms which lack either or both of asparaginyl-tRNA or glutaminyl-tRNA synthetases. The reaction takes place in the presence of glutamine and ATP through an activated phospho-Asp-tRNA(Asn) or phospho-Glu-tRNA(Gln). The protein is Aspartyl/glutamyl-tRNA(Asn/Gln) amidotransferase subunit B of Lysinibacillus sphaericus (strain C3-41).